Reading from the N-terminus, the 281-residue chain is uncharacterized protein (281 aa).

The signal sequence occupies residues 1 to 23 (MKLYRSLKAALLPGICTSILLAS). Cys-24 carries N-palmitoyl cysteine lipidation. Cys-24 carries S-diacylglycerol cysteine lipidation. The tract at residues 145–165 (HHDHNHMHNHEHEHEEHHDEE) is disordered. A compositionally biased stretch (basic and acidic residues) spans 150 to 161 (HMHNHEHEHEEH).

It is found in the cell membrane. This is an uncharacterized protein from Mycoplasma genitalium (strain ATCC 33530 / DSM 19775 / NCTC 10195 / G37) (Mycoplasmoides genitalium).